The chain runs to 314 residues: MLQSLNRSVRYLSTSIGSRLYCSNTNQTTKNNTNASGVNDNQQTHFGFKTVNKEDKESMVKDVFDSVSSSYDLMNDVMSMGIHRLWKDELINTLNPTPGSHLLDVAGGTGDISFRFLDKIKTSPNYFPNINKSNNGGGEVLKSSSLPSSATVFDINQSMLNEGKKRGLNKGYTDQSDPSIDWVQGNSEQLPFKDNTFNCYTVSFGIRNCTNIDQVLREAYRVLKPGGRFLCLEFSQVPNPLLRFAYDQYSFNVIPIMGQLISGDRDSYSYLVESIRKFPDQETFVQMIQDAGFKQVTYKNLTFGICSIHSGFKL.

The transit peptide at 1–19 (MLQSLNRSVRYLSTSIGSR) directs the protein to the mitochondrion. S-adenosyl-L-methionine is bound by residues Thr-109, Asp-154, 186–187 (NS), and Ser-203.

It belongs to the class I-like SAM-binding methyltransferase superfamily. MenG/UbiE family. In terms of assembly, component of a multi-subunit COQ enzyme complex.

The protein localises to the mitochondrion inner membrane. It catalyses the reaction a 2-methoxy-6-(all-trans-polyprenyl)benzene-1,4-diol + S-adenosyl-L-methionine = a 5-methoxy-2-methyl-3-(all-trans-polyprenyl)benzene-1,4-diol + S-adenosyl-L-homocysteine + H(+). It functions in the pathway cofactor biosynthesis; ubiquinone biosynthesis. Methyltransferase required for the conversion of 2-polyprenyl-6-methoxy-1,4-benzoquinol (DDMQH2) to 2-polyprenyl-3-methyl-6-methoxy-1,4-benzoquinol (DMQH2). This Dictyostelium discoideum (Social amoeba) protein is 2-methoxy-6-polyprenyl-1,4-benzoquinol methylase, mitochondrial.